Here is a 172-residue protein sequence, read N- to C-terminus: Translation initiation factor IF-3 (172 aa).

It belongs to the IF-3 family. In terms of assembly, monomer.

The protein localises to the cytoplasm. Its function is as follows. IF-3 binds to the 30S ribosomal subunit and shifts the equilibrium between 70S ribosomes and their 50S and 30S subunits in favor of the free subunits, thus enhancing the availability of 30S subunits on which protein synthesis initiation begins. The polypeptide is Translation initiation factor IF-3 (Haemophilus influenzae (strain ATCC 51907 / DSM 11121 / KW20 / Rd)).